We begin with the raw amino-acid sequence, 435 residues long: Trigger factor (435 aa).

The PPIase FKBP-type domain maps to 162–247 (GDRINIDYRG…LSGVESSKLP (86 aa)).

The protein belongs to the FKBP-type PPIase family. Tig subfamily.

It localises to the cytoplasm. The enzyme catalyses [protein]-peptidylproline (omega=180) = [protein]-peptidylproline (omega=0). Functionally, involved in protein export. Acts as a chaperone by maintaining the newly synthesized protein in an open conformation. Functions as a peptidyl-prolyl cis-trans isomerase. This Nitrosospira multiformis (strain ATCC 25196 / NCIMB 11849 / C 71) protein is Trigger factor.